A 117-amino-acid chain; its full sequence is Ig heavy chain V region 345 (117 aa).

Residues 1-19 (MNFGLRLIFLVLTLKGVKC) form the signal peptide. The segment at 20–49 (EVQLVESGGGLVKPGGSLKLSCAASGFAFS) is framework-1. C41 and C115 form a disulfide bridge. Residues 50 to 54 (SYDMS) form a complementarity-determining-1 region. The segment at 55-68 (WVRQTPEKRLEWVA) is framework-2. Residues 69 to 85 (YISSGGGSTYYPDTVKG) form a complementarity-determining-2 region. The interval 86-117 (RFTISRDNAKNTLYLQMSSLKSEDTAMYYCAR) is framework-3.

The chain is Ig heavy chain V region 345 from Mus musculus (Mouse).